The following is a 326-amino-acid chain: DNA repair protein XRCC4 (326 aa).

An interaction with IFFO1 region spans residues 1–212; that stretch reads MERKVSRIYL…QLEESTKPER (212 aa). Ser-53 is modified (phosphoserine; by PRKDC). 2 coiled-coil regions span residues 131 to 165 and 185 to 209; these read LDTI…FEKC and NEKK…ESTK. Residues 180 to 211 form an interaction with LIG4 region; that stretch reads FILVLNEKKTKIRSLHKLLNEVQQLEESTKPE. Ser-193 carries the post-translational modification Phosphoserine; by PRKDC. A disordered region spans residues 203–326; sequence QLEESTKPER…RNSSPEDLFD (124 aa). Basic and acidic residues predominate over residues 206–226; sequence ESTKPERENPCSDKTPEEHGL. Tyr-227 bears the Phosphotyrosine mark. Ser-230 carries the post-translational modification Phosphoserine. Thr-231 is subject to Phosphothreonine. Ser-235 is modified (phosphoserine). Thr-244 bears the Phosphothreonine mark. Ser-250 carries the post-translational modification Phosphoserine. Position 254 is a phosphoserine; by PRKDC (Ser-254). Positions 264 to 269 match the Nuclear localization signal motif; sequence RKRRHR. Lys-290 participates in a covalent cross-link: Glycyl lysine isopeptide (Lys-Gly) (interchain with G-Cter in ubiquitin). Ser-295 is subject to Phosphoserine; by PRKDC. Ser-296 bears the Phosphoserine mark. Residues Ser-307 and Ser-312 each carry the phosphoserine; by PRKDC modification. Residues 307-326 show a composition bias toward polar residues; the sequence is SAENMSLETLRNSSPEDLFD. Thr-315 is subject to Phosphothreonine; by PRKDC. Phosphoserine; by PRKDC occurs at positions 319 and 320.

This sequence belongs to the XRCC4-XLF family. XRCC4 subfamily. In terms of assembly, homodimer and homotetramer in solution. Interacts with NHEJ1/XLF; the interaction is direct and is mediated via a head-to-head interaction between N-terminal head regions. Interacts with LIG4; the LIG4-XRCC4 subcomplex has a 1:2 stoichiometry and XRCC4 is required for LIG4 stability. Component of the core long-range non-homologous end joining (NHEJ) complex (also named DNA-PK complex) composed of PRKDC, LIG4, XRCC4, XRCC6/Ku70, XRCC5/Ku86 and NHEJ1/XLF. Additional component of the NHEJ complex includes PAXX. Following autophosphorylation, PRKDC dissociates from DNA, leading to formation of the short-range NHEJ complex, composed of LIG4, XRCC4, XRCC6/Ku70, XRCC5/Ku86 and NHEJ1/XLF. Interacts with PRKDC; the interaction is direct. Interacts with XRCC6/Ku70; the interaction is direct. Interacts with APTX and APLF. Forms a heterotetramer with IFFO1; the interaction involves LIG4-free XRCC4 and leads to the relocalization of IFFO1 to the sites of DNA damage. Interacts with PNKP; mainly interacts with PNKP when phosphorylated at Thr-231, but is also able to interact at much lower level with PNKP when not unphosphorylated. Interacts with POLL (DNA polymerase lambda). As to quaternary structure, interacts with XKR4; interacts with the processed form of XKR4, which is cleaved by caspase. Post-translationally, phosphorylated by PRKDC at the C-terminus in response to DNA damage; Ser-254 and Ser-312 constitute the main phosphorylation sites. Phosphorylation by PRKDC at the C-terminus of XRCC4 and NHEJ1/XLF are highly redundant and regulate ability of the XRCC4-NHEJ1/XLF subcomplex to bridge DNA. Phosphorylation by PRKDC does not prevent interaction with NHEJ1/XLF but disrupts ability to bridge DNA and promotes detachment from DNA. Phosphorylation at Ser-319 and Ser-320 by PRKDC promotes recognition by the SCF(FBXW7) complex and subsequent ubiquitination via 'Lys-63'-linked ubiquitin. Phosphorylation at Thr-231 by CK2 promotes interaction with PNKP; regulating PNKP activity and localization to DNA damage sites. Phosphorylation by CK2 promotes interaction with APTX. In terms of processing, ubiquitinated at Lys-290 by the SCF(FBXW7) complex via 'Lys-63'-linked ubiquitination, thereby promoting double-strand break repair: the SCF(FBXW7) complex specifically recognizes XRCC4 when phosphorylated at Ser-319 and Ser-320 by PRKDC, and 'Lys-63'-linked ubiquitination facilitates DNA non-homologous end joining (NHEJ) by enhancing association with XRCC5/Ku80 and XRCC6/Ku70. Monoubiquitinated. Undergoes proteolytic processing by caspase-3 (CASP3). This generates the protein XRCC4, C-terminus (XRCC4/C), which translocates to the cytoplasm and activates phospholipid scramblase activity of XKR4, thereby promoting phosphatidylserine exposure on apoptotic cell surface.

It localises to the nucleus. The protein resides in the chromosome. Its subcellular location is the cytoplasm. In terms of biological role, DNA non-homologous end joining (NHEJ) core factor, required for double-strand break repair and V(D)J recombination. Acts as a scaffold protein that regulates recruitment of other proteins to DNA double-strand breaks (DSBs). Associates with NHEJ1/XLF to form alternating helical filaments that bridge DNA and act like a bandage, holding together the broken DNA until it is repaired. The XRCC4-NHEJ1/XLF subcomplex binds to the DNA fragments of a DSB in a highly diffusive manner and robustly bridges two independent DNA molecules, holding the broken DNA fragments in close proximity to one other. The mobility of the bridges ensures that the ends remain accessible for further processing by other repair factors. Plays a key role in the NHEJ ligation step of the broken DNA during DSB repair via direct interaction with DNA ligase IV (LIG4): the LIG4-XRCC4 subcomplex reseals the DNA breaks after the gap filling is completed. XRCC4 stabilizes LIG4, regulates its subcellular localization and enhances LIG4's joining activity. Binding of the LIG4-XRCC4 subcomplex to DNA ends is dependent on the assembly of the DNA-dependent protein kinase complex DNA-PK to these DNA ends. Promotes displacement of PNKP from processed strand break termini. Acts as an activator of the phospholipid scramblase activity of XKR4. This form, which is generated upon caspase-3 (CASP3) cleavage, translocates into the cytoplasm and interacts with XKR4, thereby promoting phosphatidylserine scramblase activity of XKR4 and leading to phosphatidylserine exposure on apoptotic cell surface. The protein is DNA repair protein XRCC4 of Mus musculus (Mouse).